The primary structure comprises 420 residues: UDP-N-acetylglucosamine 1-carboxyvinyltransferase (420 aa).

Position 22 to 23 (22 to 23 (KN)) interacts with phosphoenolpyruvate. UDP-N-acetyl-alpha-D-glucosamine is bound at residue R92. C116 functions as the Proton donor in the catalytic mechanism. C116 bears the 2-(S-cysteinyl)pyruvic acid O-phosphothioketal mark. UDP-N-acetyl-alpha-D-glucosamine is bound by residues 121–125 (RPVDQ), D304, and I326.

The protein belongs to the EPSP synthase family. MurA subfamily.

The protein resides in the cytoplasm. It carries out the reaction phosphoenolpyruvate + UDP-N-acetyl-alpha-D-glucosamine = UDP-N-acetyl-3-O-(1-carboxyvinyl)-alpha-D-glucosamine + phosphate. The protein operates within cell wall biogenesis; peptidoglycan biosynthesis. In terms of biological role, cell wall formation. Adds enolpyruvyl to UDP-N-acetylglucosamine. This chain is UDP-N-acetylglucosamine 1-carboxyvinyltransferase, found in Paraburkholderia phymatum (strain DSM 17167 / CIP 108236 / LMG 21445 / STM815) (Burkholderia phymatum).